The primary structure comprises 914 residues: Alanine--tRNA ligase (914 aa).

Zn(2+)-binding residues include His-613, His-617, Cys-717, and His-721.

The protein belongs to the class-II aminoacyl-tRNA synthetase family. The cofactor is Zn(2+).

It is found in the cytoplasm. It catalyses the reaction tRNA(Ala) + L-alanine + ATP = L-alanyl-tRNA(Ala) + AMP + diphosphate. Functionally, catalyzes the attachment of alanine to tRNA(Ala) in a two-step reaction: alanine is first activated by ATP to form Ala-AMP and then transferred to the acceptor end of tRNA(Ala). Also edits incorrectly charged Ser-tRNA(Ala) and Gly-tRNA(Ala) via its editing domain. The sequence is that of Alanine--tRNA ligase from Pyrococcus furiosus (strain ATCC 43587 / DSM 3638 / JCM 8422 / Vc1).